Consider the following 215-residue polypeptide: Protein-L-isoaspartate O-methyltransferase (215 aa).

Residue Ser-62 is part of the active site.

The protein belongs to the methyltransferase superfamily. L-isoaspartyl/D-aspartyl protein methyltransferase family.

It localises to the cytoplasm. The enzyme catalyses [protein]-L-isoaspartate + S-adenosyl-L-methionine = [protein]-L-isoaspartate alpha-methyl ester + S-adenosyl-L-homocysteine. In terms of biological role, catalyzes the methyl esterification of L-isoaspartyl residues in peptides and proteins that result from spontaneous decomposition of normal L-aspartyl and L-asparaginyl residues. It plays a role in the repair and/or degradation of damaged proteins. This chain is Protein-L-isoaspartate O-methyltransferase, found in Ruegeria sp. (strain TM1040) (Silicibacter sp.).